Consider the following 122-residue polypeptide: Large ribosomal subunit protein uL14c (122 aa).

Belongs to the universal ribosomal protein uL14 family. As to quaternary structure, part of the 50S ribosomal subunit.

The protein resides in the plastid. Its subcellular location is the chloroplast. In terms of biological role, binds to 23S rRNA. The sequence is that of Large ribosomal subunit protein uL14c from Guizotia abyssinica (Niger).